Consider the following 147-residue polypeptide: Peptide deformylase (147 aa).

The Fe cation site is built by C88 and H130. The active site involves E131. H134 is a Fe cation binding site.

Belongs to the polypeptide deformylase family. The cofactor is Fe(2+).

The catalysed reaction is N-terminal N-formyl-L-methionyl-[peptide] + H2O = N-terminal L-methionyl-[peptide] + formate. Its function is as follows. Removes the formyl group from the N-terminal Met of newly synthesized proteins. Requires at least a dipeptide for an efficient rate of reaction. N-terminal L-methionine is a prerequisite for activity but the enzyme has broad specificity at other positions. This is Peptide deformylase from Clostridium botulinum (strain Alaska E43 / Type E3).